A 97-amino-acid polypeptide reads, in one-letter code: Integration host factor subunit alpha (97 aa).

It belongs to the bacterial histone-like protein family. As to quaternary structure, heterodimer of an alpha and a beta chain.

This protein is one of the two subunits of integration host factor, a specific DNA-binding protein that functions in genetic recombination as well as in transcriptional and translational control. The chain is Integration host factor subunit alpha from Acinetobacter baylyi (strain ATCC 33305 / BD413 / ADP1).